The primary structure comprises 289 residues: ATP synthase subunit a (289 aa).

6 helical membrane-spanning segments follow: residues Ala-43–Phe-63, Ser-101–Val-121, Leu-160–Ile-180, Leu-193–Ala-213, Val-232–Val-252, and Ala-259–Val-279.

It belongs to the ATPase A chain family. F-type ATPases have 2 components, CF(1) - the catalytic core - and CF(0) - the membrane proton channel. CF(1) has five subunits: alpha(3), beta(3), gamma(1), delta(1), epsilon(1). CF(0) has three main subunits: a(1), b(2) and c(9-12). The alpha and beta chains form an alternating ring which encloses part of the gamma chain. CF(1) is attached to CF(0) by a central stalk formed by the gamma and epsilon chains, while a peripheral stalk is formed by the delta and b chains.

The protein resides in the cell inner membrane. In terms of biological role, key component of the proton channel; it plays a direct role in the translocation of protons across the membrane. The chain is ATP synthase subunit a from Pseudomonas syringae pv. syringae (strain B728a).